Reading from the N-terminus, the 399-residue chain is S-adenosylmethionine synthase (399 aa).

Histidine 17 is a binding site for ATP. A Mg(2+)-binding site is contributed by aspartate 19. Position 45 (glutamate 45) interacts with K(+). L-methionine contacts are provided by glutamate 58 and glutamine 101. The flexible loop stretch occupies residues 101–111 (QSPDIAQGVDE). ATP-binding positions include 177-179 (DAK), 244-245 (RF), aspartate 253, 259-260 (RK), alanine 276, and lysine 280. Aspartate 253 serves as a coordination point for L-methionine. An L-methionine-binding site is contributed by lysine 284.

The protein belongs to the AdoMet synthase family. Homotetramer; dimer of dimers. The cofactor is Mg(2+). It depends on K(+) as a cofactor.

The protein resides in the cytoplasm. It catalyses the reaction L-methionine + ATP + H2O = S-adenosyl-L-methionine + phosphate + diphosphate. It functions in the pathway amino-acid biosynthesis; S-adenosyl-L-methionine biosynthesis; S-adenosyl-L-methionine from L-methionine: step 1/1. In terms of biological role, catalyzes the formation of S-adenosylmethionine (AdoMet) from methionine and ATP. The overall synthetic reaction is composed of two sequential steps, AdoMet formation and the subsequent tripolyphosphate hydrolysis which occurs prior to release of AdoMet from the enzyme. The sequence is that of S-adenosylmethionine synthase from Listeria welshimeri serovar 6b (strain ATCC 35897 / DSM 20650 / CCUG 15529 / CIP 8149 / NCTC 11857 / SLCC 5334 / V8).